Here is a 218-residue protein sequence, read N- to C-terminus: Claudin-3 (218 aa).

Over 1-8 (MSMGLEIA) the chain is Cytoplasmic. The helical transmembrane segment at 9 to 29 (GTSLAVLGWLSTIVCCALPMW) threads the bilayer. Residues 30 to 80 (RVTAFIGSSIITAQITWEGLWMNCVVQSTGQMQCKVYDSLLALPQDLQAAR) are Extracellular-facing. Residues 81–101 (ALIVVSILLAAFGLLVALVGA) form a helical membrane-spanning segment. Residues 102 to 115 (QCTNCVQDDTAKAK) are Cytoplasmic-facing. A helical membrane pass occupies residues 116–136 (ITIVAGVLFLLAALLTLVPVS). The Extracellular portion of the chain corresponds to 137–159 (WSANTIIRDFYNPLVPDAQKREM). Residues 160–180 (GAGLYVGWAAAALQLLGGALL) traverse the membrane as a helical segment. Residues 181–218 (CCSCPPRDKKYAPTKIVYSAPRSAGPGTSTAYDRKDYV) lie on the Cytoplasmic side of the membrane. Tyrosine 198 is modified (phosphotyrosine). 2 positions are modified to phosphoserine: serine 199 and serine 209. An interactions with TJP1, TJP2 and TJP3 region spans residues 217 to 218 (YV).

The protein belongs to the claudin family. As to quaternary structure, can form homo- and heteropolymers with other CLDN. Homopolymers interact with CLDN1 and CLDN2 homopolymers. Interacts in cis (within the same plasma membrane) with CLDN19. Directly interacts with TJP1/ZO-1, TJP2/ZO-2 and TJP3/ZO-3.

It is found in the cell junction. It localises to the tight junction. Its subcellular location is the cell membrane. Functionally, plays a major role in tight junction-specific obliteration of the intercellular space, through calcium-independent cell-adhesion activity. This Canis lupus familiaris (Dog) protein is Claudin-3 (CLDN3).